Here is a 669-residue protein sequence, read N- to C-terminus: DNA ligase (669 aa).

Residues 35–39, 84–85, and Glu-114 each bind NAD(+); these read DSEYD and SL. Lys-116 functions as the N6-AMP-lysine intermediate in the catalytic mechanism. Positions 137, 171, 287, and 311 each coordinate NAD(+). Residues Cys-405, Cys-408, Cys-423, and Cys-428 each contribute to the Zn(2+) site. A BRCT domain is found at 591–669; that stretch reads DSDSYFAGKT…EAQLLGELKK (79 aa).

This sequence belongs to the NAD-dependent DNA ligase family. LigA subfamily. The cofactor is Mg(2+). Requires Mn(2+) as cofactor.

It catalyses the reaction NAD(+) + (deoxyribonucleotide)n-3'-hydroxyl + 5'-phospho-(deoxyribonucleotide)m = (deoxyribonucleotide)n+m + AMP + beta-nicotinamide D-nucleotide.. DNA ligase that catalyzes the formation of phosphodiester linkages between 5'-phosphoryl and 3'-hydroxyl groups in double-stranded DNA using NAD as a coenzyme and as the energy source for the reaction. It is essential for DNA replication and repair of damaged DNA. In Bacillus velezensis (strain DSM 23117 / BGSC 10A6 / LMG 26770 / FZB42) (Bacillus amyloliquefaciens subsp. plantarum), this protein is DNA ligase.